The sequence spans 887 residues: Translation initiation factor IF-2 (887 aa).

Residues 1 to 259 (MSDEQDQGET…KVGDDRRRGA (259 aa)) are disordered. Residues 62 to 94 (GRPSAPSRASGGAAAPRGLTAAEQAARQRAVVE) show a composition bias toward low complexity. Composition is skewed to basic and acidic residues over residues 95 to 111 (QQRE…EQEK) and 119 to 158 (EEAR…RRAA). Low complexity predominate over residues 159-210 (EASQATAAPPAPAAAASPRAAMPAPTAAPARPGAAPARRTAPVPPATSASET). Basic and acidic residues predominate over residues 250-259 (KVGDDRRRGA). One can recognise a tr-type G domain in the interval 386-556 (VRPPVVTIMG…LLQAELLDLK (171 aa)). Residues 395-402 (GHVDHGKT) form a G1 region. 395-402 (GHVDHGKT) serves as a coordination point for GTP. The G2 stretch occupies residues 420-424 (GITQH). The G3 stretch occupies residues 442 to 445 (DTPG). GTP contacts are provided by residues 442–446 (DTPGH) and 496–499 (NKID). The G4 stretch occupies residues 496-499 (NKID). Positions 532 to 534 (SAL) are G5.

Belongs to the TRAFAC class translation factor GTPase superfamily. Classic translation factor GTPase family. IF-2 subfamily.

It localises to the cytoplasm. One of the essential components for the initiation of protein synthesis. Protects formylmethionyl-tRNA from spontaneous hydrolysis and promotes its binding to the 30S ribosomal subunits. Also involved in the hydrolysis of GTP during the formation of the 70S ribosomal complex. The polypeptide is Translation initiation factor IF-2 (Acidiphilium cryptum (strain JF-5)).